A 332-amino-acid chain; its full sequence is Anthranilate phosphoribosyltransferase (332 aa).

Residues Gly-79, 82 to 83, Ser-87, 89 to 92, 107 to 115, and Ser-119 each bind 5-phospho-alpha-D-ribose 1-diphosphate; these read GD, NIST, and KHGNRSVSS. Gly-79 serves as a coordination point for anthranilate. Ser-91 lines the Mg(2+) pocket. Asn-110 lines the anthranilate pocket. Arg-165 contributes to the anthranilate binding site. Residues Asp-223 and Glu-224 each coordinate Mg(2+).

This sequence belongs to the anthranilate phosphoribosyltransferase family. In terms of assembly, homodimer. It depends on Mg(2+) as a cofactor.

The catalysed reaction is N-(5-phospho-beta-D-ribosyl)anthranilate + diphosphate = 5-phospho-alpha-D-ribose 1-diphosphate + anthranilate. It functions in the pathway amino-acid biosynthesis; L-tryptophan biosynthesis; L-tryptophan from chorismate: step 2/5. Its function is as follows. Catalyzes the transfer of the phosphoribosyl group of 5-phosphorylribose-1-pyrophosphate (PRPP) to anthranilate to yield N-(5'-phosphoribosyl)-anthranilate (PRA). In Photorhabdus laumondii subsp. laumondii (strain DSM 15139 / CIP 105565 / TT01) (Photorhabdus luminescens subsp. laumondii), this protein is Anthranilate phosphoribosyltransferase.